We begin with the raw amino-acid sequence, 394 residues long: Cell division protein FtsZ (394 aa).

Residues 21 to 25 (GGGNN), 108 to 110 (GTG), E139, R143, and D187 each bind GTP. Residues 317 to 394 (DKPSSQGRKA…EERRSRRTRR (78 aa)) form a disordered region. Composition is skewed to low complexity over residues 328-346 (STGF…SGAS) and 353-364 (SAHTSHSQSSES). Residues 365–388 (VNERSHTTKDDDIPSFIRNREERR) show a composition bias toward basic and acidic residues.

Belongs to the FtsZ family. As to quaternary structure, homodimer. Polymerizes to form a dynamic ring structure in a strictly GTP-dependent manner. Interacts directly with several other division proteins.

The protein resides in the cytoplasm. In terms of biological role, essential cell division protein that forms a contractile ring structure (Z ring) at the future cell division site. The regulation of the ring assembly controls the timing and the location of cell division. One of the functions of the FtsZ ring is to recruit other cell division proteins to the septum to produce a new cell wall between the dividing cells. Binds GTP and shows GTPase activity. The chain is Cell division protein FtsZ from Staphylococcus epidermidis (strain ATCC 12228 / FDA PCI 1200).